A 200-amino-acid chain; its full sequence is Lipopolysaccharide core heptose(II)-phosphate phosphatase (200 aa).

An N-terminal signal peptide occupies residues 1–25 (MLAFCRSSLKSKKYIIILLALAAIA).

Belongs to the phosphoglycerate mutase family. Ais subfamily.

Its subcellular location is the periplasm. Its pathway is bacterial outer membrane biogenesis; lipopolysaccharide metabolism. Functionally, catalyzes the dephosphorylation of heptose(II) of the outer membrane lipopolysaccharide core. The polypeptide is Lipopolysaccharide core heptose(II)-phosphate phosphatase (Escherichia coli (strain ATCC 8739 / DSM 1576 / NBRC 3972 / NCIMB 8545 / WDCM 00012 / Crooks)).